The chain runs to 1736 residues: Centrosomal protein of 152 kDa (1736 aa).

The tract at residues 1–60 is interaction with PLK4; it reads MSLEFGSVALQTQNEDEEFDKEDFEREKELQQLLTDLPHDMLDDELSSPERHDSDCSMDG. Residues 1 to 127 form a disordered region; sequence MSLEFGSVAL…SGYSPPGKRE (127 aa). Composition is skewed to basic and acidic residues over residues 61-82 and 94-105; these read RAAE…DILP and EENRSKTEDQHL. 6 coiled-coil regions span residues 228 to 481, 552 to 651, 692 to 776, 835 to 868, 950 to 1075, and 1205 to 1315; these read IIQL…AELG, HLVS…QEFD, LEVY…TERQ, AAVS…ALRK, NVMS…YEED, and GHCF…KIKR. Residues 571-592 are disordered; sequence FQQSKDGDSGMETKTDTSEKTT. Residues 575–592 are compositionally biased toward basic and acidic residues; the sequence is KDGDSGMETKTDTSEKTT. T1277 carries the phosphothreonine modification. Disordered stretches follow at residues 1416–1479, 1543–1562, 1574–1614, and 1677–1736; these read GTER…ASTA, EKNS…LRSP, GSPT…SDST, and QQGK…SPLE. Over residues 1462-1473 the composition is skewed to basic and acidic residues; that stretch reads RRLEESKHREMR. Polar residues-rich tracts occupy residues 1576-1595 and 1603-1614; these read PTET…SQDS and PSSSPAWPSDST. Residue K1714 is modified to N6-acetyllysine.

This sequence belongs to the CEP152 family. As to quaternary structure, interacts (via N-terminus) with PLK4; the interaction is mutally exclusive with a PLK4:CEP192 interaction. Interacts (via C-terminus) with CPAP (via-N-terminus). Interacts with CINP. Interacts with CDK5RAP2, WDR62, CEP63 and CEP131. CEP63, CDK5RAP2, CEP152, WDR62 are proposed to form a stepwise assembled complex at the centrosome forming a ring near parental centrioles. Interacts with DEUP1; this interaction recruits CEP152 to the deuterosome. The interactions with CEP63 and DEUP1 are mutually exclusive. Interacts with CCDC66.

The protein localises to the cytoplasm. It localises to the cytoskeleton. Its subcellular location is the microtubule organizing center. It is found in the centrosome. The protein resides in the centriole. In terms of biological role, necessary for centrosome duplication; the function also seems to involve CEP63, CDK5RAP2 and WDR62 through a stepwise assembled complex at the centrosome that recruits CDK2 required for centriole duplication. Acts as a molecular scaffold facilitating the interaction of PLK4 and CPAP, 2 molecules involved in centriole formation. Proposed to snatch PLK4 away from PLK4:CEP92 complexes in early G1 daughter centriole and to reposition PLK4 at the outer boundary of a newly forming CEP152 ring structure. Also plays a key role in deuterosome-mediated centriole amplification in multiciliated that can generate more than 100 centrioles. Overexpression of cep152 can drive amplification of centrioles. The polypeptide is Centrosomal protein of 152 kDa (Cep152) (Mus musculus (Mouse)).